The sequence spans 473 residues: Monocarboxylate transporter 4 (473 aa).

Over 1–17 (MGAVVVDDGPSGVKAPD) the chain is Cytoplasmic. The chain crosses the membrane as a helical span at residues 18–38 (GGWGWAVLFGCFIITGFSYAF). Residues 39 to 61 (PKAVSVFFKELIREFGVGYSDTA) are Extracellular-facing. A helical transmembrane segment spans residues 62-82 (WISSILLAMLYGTGPLCSVCV). Residues 83 to 91 (NRFGCRPVM) lie on the Cytoplasmic side of the membrane. A helical transmembrane segment spans residues 92 to 112 (LVGGLFASMGMVIASFCTSIV). Topologically, residues 113–115 (QIY) are extracellular. The helical transmembrane segment at 116–136 (LTAGVITGLGLALNFQPSLIM) threads the bilayer. The Cytoplasmic portion of the chain corresponds to 137–149 (LNRYFDKRRPLAN). A helical membrane pass occupies residues 150–170 (GLSAAGSPVFLCALSPLGQIL). Residues 171–179 (QHEYGWRGG) lie on the Extracellular side of the membrane. A helical transmembrane segment spans residues 180 to 200 (FLILGGMLLNCCVCGALMRPL). Over 201 to 231 (EPPKKSEATKEPAEKKAKKKLLDFSVFKDGG) the chain is Cytoplasmic. A helical membrane pass occupies residues 232-252 (FVIYTLAASIMVLGLFVPPVF). At 253–268 (VVSYAKDLGYQDTKAA) the chain is on the extracellular side. The helical transmembrane segment at 269–289 (FLLTILGFIDIFARPICGMVA) threads the bilayer. The Cytoplasmic segment spans residues 290–297 (GLKWVRPR). A helical transmembrane segment spans residues 298-318 (CVYLFSFAMIFNGFTDLMGSM). Residues 319 to 321 (SVD) are Extracellular-facing. Residues 322-342 (YGGLVVFCIFFGISYGMVGAL) form a helical membrane-spanning segment. Over 343–358 (QFEVLMAIVGTQKFSS) the chain is Cytoplasmic. Residues 359–379 (AIGLVLLAEAMAVLIGPPSAG) form a helical membrane-spanning segment. Over 380–388 (KLLDLTRRY) the chain is Extracellular. The helical transmembrane segment at 389–409 (MFVFIIAGIEVTTSALVLALG) threads the bilayer. Over 410–473 (NFFCIKKKPA…EVVTNPETCV (64 aa)) the chain is Cytoplasmic. The tract at residues 421–447 (PHTKEAAAEREELNKSEDKTPEDAKVD) is disordered. Basolateral sorting signal regions lie at residues 427–449 (AAER…VDSI) and 449–473 (IEVE…ETCV).

Belongs to the major facilitator superfamily. Monocarboxylate porter (TC 2.A.1.13) family. Interacts with BSG; interaction mediates SLC16A3 targeting to the plasma membrane.

Its subcellular location is the cell membrane. The protein resides in the basolateral cell membrane. The enzyme catalyses (S)-lactate(in) + H(+)(in) = (S)-lactate(out) + H(+)(out). It catalyses the reaction pyruvate(out) + H(+)(out) = pyruvate(in) + H(+)(in). Its function is as follows. Proton-dependent transporter of monocarboxylates such as L-lactate and pyruvate. Plays a predominant role in the L-lactate efflux from highly glycolytic cells. This chain is Monocarboxylate transporter 4 (SLC16A3), found in Gallus gallus (Chicken).